The following is a 27-amino-acid chain: Small integral membrane protein 43 (27 aa).

Residues 15 to 21 (HREPWGF) are important for interaction with SLC2A1 and SLC2A3.

As to quaternary structure, interacts with glucose transporters SLC2A1/GLUT1 and SLC2A3/GLUT3; the interactions may promote SLC2A1- and SLC2A3-mediated glucose transport to meet the energy needs of mesendoderm differentiation.

The protein localises to the cell membrane. Its function is as follows. Required for mesendoderm differentiation. Interacts with glucose transporters and promotes glucose uptake. Probably augments the glucose uptake capacity of glucose transporter proteins to meet the energy needs of mesendoderm differentiation. This is Small integral membrane protein 43 from Pongo abelii (Sumatran orangutan).